The primary structure comprises 69 residues: U2-agatoxin-Ao1w (69 aa).

The first 20 residues, Met-1–Ala-20, serve as a signal peptide directing secretion. Positions Val-21–Arg-34 are excised as a propeptide. 3 cysteine pairs are disulfide-bonded: Cys-37–Cys-53, Cys-44–Cys-58, and Cys-52–Cys-68.

The protein belongs to the neurotoxin 01 (U2-agtx) family. As to expression, expressed by the venom gland.

The protein resides in the secreted. In terms of biological role, insect active toxin causing rapid but reversible paralysis in crickets. No activity shown in mammals. Does not show effect on mammalian voltage-gated calcium channels. The protein is U2-agatoxin-Ao1w of Agelena orientalis (Funnel-web spider).